Here is a 223-residue protein sequence, read N- to C-terminus: Ribosome maturation factor RimM (223 aa).

The region spanning alanine 142 to tyrosine 223 is the PRC barrel domain.

It belongs to the RimM family. As to quaternary structure, binds ribosomal protein uS19.

It localises to the cytoplasm. An accessory protein needed during the final step in the assembly of 30S ribosomal subunit, possibly for assembly of the head region. Essential for efficient processing of 16S rRNA. May be needed both before and after RbfA during the maturation of 16S rRNA. It has affinity for free ribosomal 30S subunits but not for 70S ribosomes. The chain is Ribosome maturation factor RimM from Burkholderia multivorans (strain ATCC 17616 / 249).